A 212-amino-acid chain; its full sequence is F-box protein GID2 (212 aa).

Residues 1-74 (MKFRSDSSGG…AGEGEQPRVP (74 aa)) form a disordered region. The segment covering 35-59 (DPSSSSSQGEASSSSQPPPQQQQEE) has biased composition (low complexity). In terms of domain architecture, F-box spans 70-116 (QPRVPDLGEDLVFEVLRRAEARTLAAAACVSRGWRQLAEDERLWEAA).

As to quaternary structure, part of some SCF(GID2) complex, which consist of a SKP1 protein, CUL1, GID2 and some RING box protein. Interacts directly with SKP2 and SKP15. Interacts directly with DELLA protein SLR1. May have a higher affinity for phosphorylated SLR1 proteins. As to expression, widely expressed. Preferentially expressed in unopened flowers, shoot apices and elongation stem. Expressed at lower level in the leaf blades, leaf sheaths, roots and rachis.

The protein resides in the nucleus. It functions in the pathway protein modification; protein ubiquitination. In terms of biological role, essential component of some SCF-type E3 ligase complex that positively regulates the gibberellin signaling pathway. Upon gibberellin treatment, the complex mediates the ubiquitination and subsequent degradation of DELLA protein SLR1, a repressor of the gibberellin pathway, leading to activate the pathway. The polypeptide is F-box protein GID2 (GID2) (Oryza sativa subsp. japonica (Rice)).